The following is a 267-amino-acid chain: Large ribosomal subunit protein uL4 (267 aa).

The protein belongs to the universal ribosomal protein uL4 family. In terms of assembly, part of the 50S ribosomal subunit.

Its function is as follows. One of the primary rRNA binding proteins, this protein initially binds near the 5'-end of the 23S rRNA. It is important during the early stages of 50S assembly. It makes multiple contacts with different domains of the 23S rRNA in the assembled 50S subunit and ribosome. Functionally, forms part of the polypeptide exit tunnel. The protein is Large ribosomal subunit protein uL4 of Saccharolobus solfataricus (strain ATCC 35092 / DSM 1617 / JCM 11322 / P2) (Sulfolobus solfataricus).